A 329-amino-acid chain; its full sequence is ADP-L-glycero-D-manno-heptose-6-epimerase (329 aa).

Residues 10-11 (FI), 31-32 (DD), K38, K53, 74-78 (QGACS), and N91 contribute to the NADP(+) site. Y138 functions as the Proton acceptor in the catalytic mechanism. K142 serves as a coordination point for NADP(+). N167 contacts substrate. Positions 168 and 176 each coordinate NADP(+). The active-site Proton acceptor is the K176. Substrate-binding positions include R178, H185, 199 to 202 (FAGW), R212, and Y291.

It belongs to the NAD(P)-dependent epimerase/dehydratase family. HldD subfamily. Homopentamer. NADP(+) is required as a cofactor.

It catalyses the reaction ADP-D-glycero-beta-D-manno-heptose = ADP-L-glycero-beta-D-manno-heptose. Its pathway is nucleotide-sugar biosynthesis; ADP-L-glycero-beta-D-manno-heptose biosynthesis; ADP-L-glycero-beta-D-manno-heptose from D-glycero-beta-D-manno-heptose 7-phosphate: step 4/4. It participates in bacterial outer membrane biogenesis; LPS core biosynthesis. Catalyzes the interconversion between ADP-D-glycero-beta-D-manno-heptose and ADP-L-glycero-beta-D-manno-heptose via an epimerization at carbon 6 of the heptose. This is ADP-L-glycero-D-manno-heptose-6-epimerase from Bordetella pertussis (strain Tohama I / ATCC BAA-589 / NCTC 13251).